The chain runs to 100 residues: Small ribosomal subunit protein uS14c (100 aa).

This sequence belongs to the universal ribosomal protein uS14 family. In terms of assembly, part of the 30S ribosomal subunit.

The protein resides in the plastid. Its subcellular location is the chloroplast. Binds 16S rRNA, required for the assembly of 30S particles. In Emiliania huxleyi (Coccolithophore), this protein is Small ribosomal subunit protein uS14c.